The chain runs to 195 residues: FMN-dependent NADH:quinone oxidoreductase (195 aa).

FMN-binding positions include Ser9, 15–17 (SVS), 85–88 (MYNF), and 129–132 (SRGG).

This sequence belongs to the azoreductase type 1 family. In terms of assembly, homodimer. The cofactor is FMN.

The enzyme catalyses 2 a quinone + NADH + H(+) = 2 a 1,4-benzosemiquinone + NAD(+). The catalysed reaction is N,N-dimethyl-1,4-phenylenediamine + anthranilate + 2 NAD(+) = 2-(4-dimethylaminophenyl)diazenylbenzoate + 2 NADH + 2 H(+). Its function is as follows. Quinone reductase that provides resistance to thiol-specific stress caused by electrophilic quinones. Functionally, also exhibits azoreductase activity. Catalyzes the reductive cleavage of the azo bond in aromatic azo compounds to the corresponding amines. This Stenotrophomonas maltophilia (strain K279a) protein is FMN-dependent NADH:quinone oxidoreductase.